The primary structure comprises 115 residues: Hydrogenase maturation factor HypA (115 aa).

H2 lines the Ni(2+) pocket. Residues C73, C76, C89, and C92 each coordinate Zn(2+).

This sequence belongs to the HypA/HybF family.

Functionally, involved in the maturation of [NiFe] hydrogenases. Required for nickel insertion into the metal center of the hydrogenase. In Nitrosospira multiformis (strain ATCC 25196 / NCIMB 11849 / C 71), this protein is Hydrogenase maturation factor HypA.